The primary structure comprises 82 residues: MLLSILLQVATGTGLAKLGEALGAGLAVIGAGLGIGKIGESAMEGIARQPEAAGDIRMNMIIAAALVEGVSLFAVVVCGFLL.

2 consecutive transmembrane segments (helical) span residues 18 to 38 (LGEALGAGLAVIGAGLGIGKI) and 61 to 81 (IIAAALVEGVSLFAVVVCGFL).

This sequence belongs to the ATPase C chain family. F-type ATPases have 2 components, F(1) - the catalytic core - and F(0) - the membrane proton channel. F(1) has five subunits: alpha(3), beta(3), gamma(1), delta(1), epsilon(1). F(0) has three main subunits: a(1), b(2) and c(10-14). The alpha and beta chains form an alternating ring which encloses part of the gamma chain. F(1) is attached to F(0) by a central stalk formed by the gamma and epsilon chains, while a peripheral stalk is formed by the delta and b chains.

It localises to the cell inner membrane. F(1)F(0) ATP synthase produces ATP from ADP in the presence of a proton or sodium gradient. F-type ATPases consist of two structural domains, F(1) containing the extramembraneous catalytic core and F(0) containing the membrane proton channel, linked together by a central stalk and a peripheral stalk. During catalysis, ATP synthesis in the catalytic domain of F(1) is coupled via a rotary mechanism of the central stalk subunits to proton translocation. Functionally, key component of the F(0) channel; it plays a direct role in translocation across the membrane. A homomeric c-ring of between 10-14 subunits forms the central stalk rotor element with the F(1) delta and epsilon subunits. The sequence is that of ATP synthase subunit c from Azobacteroides pseudotrichonymphae genomovar. CFP2.